An 81-amino-acid chain; its full sequence is Putative defensin-like protein 52 (81 aa).

The signal sequence occupies residues 1 to 20 (MTFFLVIILAISSSNYNVLA). Disulfide bonds link Cys31–Cys55 and Cys41–Cys64.

The protein belongs to the DEFL family.

The protein resides in the secreted. The sequence is that of Putative defensin-like protein 52 from Arabidopsis thaliana (Mouse-ear cress).